The primary structure comprises 209 residues: Probable endopeptidase Cgl2188 (209 aa).

An N-terminal signal peptide occupies residues 1–35 (MGKHRRNNSNATRKAVAASAVALGATAAIASPAQA). One can recognise a NlpC/P60 domain in the interval 95 to 209 (ASTGQAIVDA…YMPFHSAVRF (115 aa)). Cysteine 125 serves as the catalytic Nucleophile. The active-site Proton acceptor is the histidine 173. Histidine 185 is a catalytic residue.

Belongs to the peptidase C40 family.

Its subcellular location is the secreted. This chain is Probable endopeptidase Cgl2188, found in Corynebacterium glutamicum (strain ATCC 13032 / DSM 20300 / JCM 1318 / BCRC 11384 / CCUG 27702 / LMG 3730 / NBRC 12168 / NCIMB 10025 / NRRL B-2784 / 534).